A 337-amino-acid polypeptide reads, in one-letter code: Inositol 2-dehydrogenase (337 aa).

The protein belongs to the Gfo/Idh/MocA family. In terms of assembly, homotetramer.

The enzyme catalyses myo-inositol + NAD(+) = scyllo-inosose + NADH + H(+). In terms of biological role, involved in the oxidation of myo-inositol (MI) to 2-keto-myo-inositol (2KMI or 2-inosose). The polypeptide is Inositol 2-dehydrogenase (Burkholderia ambifaria (strain MC40-6)).